Reading from the N-terminus, the 361-residue chain is 3-dehydroquinate synthase (361 aa).

It belongs to the archaeal-type DHQ synthase family.

It catalyses the reaction 2-amino-2,3,7-trideoxy-D-lyxo-hept-6-ulosonate + NAD(+) + H2O = 3-dehydroquinate + NH4(+) + NADH + H(+). In terms of biological role, catalyzes the oxidative deamination and cyclization of 2-amino-3,7-dideoxy-D-threo-hept-6-ulosonic acid (ADH) to yield 3-dehydroquinate (DHQ), which is fed into the canonical shikimic pathway of aromatic amino acid biosynthesis. The protein is 3-dehydroquinate synthase of Methanococcus maripaludis (strain C7 / ATCC BAA-1331).